The primary structure comprises 534 residues: MSKRNPKILKIFLYMLLLNSLFLIIYFVFHSSSFSPEQSQPPHIYHVSVNNQSAIQKPWPILPSYLPWTPPQRNLPTGSCEGYFGNGFTKRVDFLKPRIGGGGEGSWFRCFYSETLQSSICEGRNLRMVPDRIVMSRGGEKLEEVMGRKEEEELPAFRQGAFEVAEEVSSRLGFKRHRRFGGGEGGSAVSRRLVNDEMLNEYMQEGGIDRHTMRDLVASIRAVDTNDFVCEEWVEEPTLLVTRFEYANLFHTVTDWYSAYVSSRVTGLPNRPHVVFVDGHCTTQLEETWTALFSGIRYAKNFTKPVCFRHAILSPLGYETALFKGLSGEIDCKGDSAHNLWQNPDDKRTARISEFGEMIRAAFGLPVNRHRSLEKPLSSSSSSASVYNVLFVRREDYLAHPRHGGKVQSRLINEEEVFDSLHHWVATGSTGLTKCGINLVNGLLAHMSMKDQVRAIQDASVIIGAHGAGLTHIVSATPNTTIFEIISVEFQRPHFELIAKWKGLEYHAMHLANSRAEPTAVIEKLTEIMKSLGC.

Residues M1 to I11 lie on the Cytoplasmic side of the membrane. The helical; Signal-anchor for type II membrane protein transmembrane segment at F12–F34 threads the bilayer. Residues S35–C534 are Lumenal-facing. N51, N301, and N479 each carry an N-linked (GlcNAc...) asparagine glycan.

Post-translationally, glycosylation at least at one of the two sites Asn-51 and Asn-301 is necessary for enzyme stability and activity.

The protein localises to the golgi apparatus membrane. It catalyses the reaction N(4)-{beta-D-GlcNAc-(1-&gt;2)-alpha-D-Man-(1-&gt;3)-[beta-D-GlcNAc-(1-&gt;2)-alpha-D-Man-(1-&gt;6)]-beta-D-Man-(1-&gt;4)-beta-D-GlcNAc-(1-&gt;4)-beta-D-GlcNAc}-L-asparaginyl-[protein] + UDP-alpha-D-xylose = N(4)-{beta-D-GlcNAc-(1-&gt;2)-alpha-D-Man-(1-&gt;3)-[beta-D-GlcNAc-(1-&gt;2)-alpha-D-Man-(1-&gt;6)]-[beta-D-Xyl-(1-&gt;2)]-beta-D-Man-(1-&gt;4)-beta-D-GlcNAc-(1-&gt;4)-beta-D-GlcNAc}-L-asparaginyl-[protein] + UDP + H(+). It functions in the pathway protein modification; protein glycosylation. Glycosyltransferase involved in the xylosylation of N-glycans. Possesses beta-1,2-xylosyltransferase activity, transferring xylose from UDP-xylose to the core beta-linked mannose of N-glycans. Involved in the biosynthesis of glycoprotein bound N-glycans. Does not require metal ions for its activity. The sequence is that of Beta-1,2-xylosyltransferase from Arabidopsis thaliana (Mouse-ear cress).